A 370-amino-acid polypeptide reads, in one-letter code: Mitogen-activated protein kinase 3 (370 aa).

Residues 38-324 enclose the Protein kinase domain; that stretch reads RPPIIPIGRG…VEQALNHQYL (287 aa). Residues 44–52 and Lys-67 contribute to the ATP site; that span reads IGRGAYGIV. The active-site Proton acceptor is Asp-164. Thr-196 is modified (phosphothreonine). The TXY signature appears at 196-198; that stretch reads TEY. Phosphotyrosine is present on Tyr-198. Residue Thr-201 is modified to Phosphothreonine.

The protein belongs to the protein kinase superfamily. CMGC Ser/Thr protein kinase family. MAP kinase subfamily. As to quaternary structure, interacts with DSPTP1B/MKP2, NDPK2 and VIP1. The interaction with DSPTP1B/MKP2 is repressed by fungal elicitation. Binds to LIP5. Interacts with VQ4. Interacts with RACK1A, RACK1B and RACK1C. Interacts with FLZ9. Interacts with MKK5. Post-translationally, dually phosphorylated on Thr-196 and Tyr-198, which activates the enzyme. Dephosphorylated by DSPTP1B/MKP2.

Its subcellular location is the cytoplasm. The protein resides in the nucleus. It is found in the cell cortex. It carries out the reaction L-seryl-[protein] + ATP = O-phospho-L-seryl-[protein] + ADP + H(+). The catalysed reaction is L-threonyl-[protein] + ATP = O-phospho-L-threonyl-[protein] + ADP + H(+). Activated by threonine and tyrosine phosphorylation. Activated by MAP kinase kinases MKK4, MKK5, MKK7 and MKK9. Activated in response to hydrogen peroxide, ozone, salt stress and flagellin bacterial elicitor. Triggered by Agrobacterium upon T-DNA transfer. Repressed by DSPTP1B/MKP2-mediated dephosphorylation. Functionally, involved in oxidative stress-mediated signaling cascade (such as ozone). Involved in the innate immune MAP kinase signaling cascade (MEKK1, MKK4/MKK5 and MPK3/MPK6) downstream of bacterial flagellin receptor FLS2. May be involved in hypersensitive response (HR)-mediated signaling cascade by modulating LIP5 phosphorylation and subsequent multivesicular bodies (MVBs) trafficking. May phosphorylate regulators of WRKY transcription factors. Mediates the phosphorylation of VIP1 and subsequent stress genes transcription in response to Agrobacterium. MKK9-MPK3/MPK6 module phosphorylates and activates EIN3, leading to the promotion of EIN3-mediated transcription in ethylene signaling. MPK3/MPK6 cascade regulates camalexin synthesis through transcriptional regulation of the biosynthetic genes after pathogen infection. YDA-MKK4/MKK5-MPK3/MPK6 module regulates stomatal cell fate before the guard mother cell (GMC) is specified. When activated, reinforces the feedback loop by phosphorylating BASL, and inhibits stomatal fate by phosphorylating SPCH. This MAPK cascade also functions downstream of the ER receptor in regulating coordinated local cell proliferation, which shapes the morphology of plant organs. In Arabidopsis thaliana (Mouse-ear cress), this protein is Mitogen-activated protein kinase 3.